Here is a 1165-residue protein sequence, read N- to C-terminus: Integrin alpha-L (1165 aa).

An N-terminal signal peptide occupies residues 1 to 23; that stretch reads MNSCIIVLRLLLSGPFVFAPAWS. The Extracellular segment spans residues 24-1084; it reads YNLDVRHVQN…MKVDLVYEKE (1061 aa). 2 FG-GAP repeats span residues 29-80 and 81-138; these read RHVQ…DCLP and VTLS…GPVL. Residue asparagine 33 is glycosylated (N-linked (GlcNAc...) asparagine). Cysteine 71 and cysteine 78 are joined by a disulfide. A glycan (N-linked (GlcNAc...) asparagine) is linked at asparagine 86. A disulfide bridge connects residues cysteine 108 and cysteine 126. Residues 153–324 form the VWFA domain; sequence DLVFLFDGSM…EKLKDLFTEL (172 aa). A glycan (N-linked (GlcNAc...) asparagine) is linked at asparagine 185. 5 FG-GAP repeats span residues 335–386, 387–442, 443–503, 504–560, and 564–624; these read SKQD…SSTF, VGNE…GGPW, SQIQ…EFQM, VSEL…GLSP, and QRIE…FSPA. Ca(2+) is bound by residues aspartate 465, aspartate 467, aspartate 469, glutamate 473, aspartate 527, asparagine 529, aspartate 531, aspartate 535, aspartate 587, aspartate 591, and aspartate 595. Asparagine 646, asparagine 667, and asparagine 723 each carry an N-linked (GlcNAc...) asparagine glycan. Cysteine 650 and cysteine 704 are oxidised to a cystine. 2 disulfides stabilise this stretch: cysteine 768/cysteine 774 and cysteine 842/cysteine 858. N-linked (GlcNAc...) asparagine glycosylation is found at asparagine 859, asparagine 894, and asparagine 929. Cystine bridges form between cysteine 994/cysteine 1009 and cysteine 1017/cysteine 1048. 2 N-linked (GlcNAc...) asparagine glycosylation sites follow: asparagine 1056 and asparagine 1067. Residues 1085–1105 traverse the membrane as a helical segment; the sequence is MLYLYVLSGIGGLLLLFLIFI. The Cytoplasmic portion of the chain corresponds to 1106–1165; that stretch reads ALYKVGFFKRNLKEKMEANVDASSEIPGEDAGQPELEKECKDPGCLEPLQKTDEDGSGGD. The short motif at 1111–1115 is the GFFKR motif element; that stretch reads GFFKR. Residues 1123 to 1165 form a disordered region; sequence ANVDASSEIPGEDAGQPELEKECKDPGCLEPLQKTDEDGSGGD. The segment covering 1140–1159 has biased composition (basic and acidic residues); that stretch reads ELEKECKDPGCLEPLQKTDE.

It belongs to the integrin alpha chain family. In terms of assembly, heterodimer of an alpha and a beta subunit. The ITGAL alpha subunit associates with the ITGB2 beta subunit. Interacts with THBD. Interacts with CD226. Post-translationally, in resting T-cells, up to 40% of surface ITGAL is constitutively phosphorylated. Phosphorylation causes conformational changes needed for ligand binding and is necessary for the activation by some physiological agents.

Its subcellular location is the cell membrane. Its function is as follows. Integrin ITGAL/ITGB2 is a receptor for ICAM1, ICAM2, ICAM3 and ICAM4. Integrin ITGAL/ITGB2 is a receptor for F11R. Integrin ITGAL/ITGB2 is a receptor for the secreted form of ubiquitin-like protein ISG15; the interaction is mediated by ITGAL. Involved in a variety of immune phenomena including leukocyte-endothelial cell interaction, cytotoxic T-cell mediated killing, and antibody dependent killing by granulocytes and monocytes. Contributes to natural killer cell cytotoxicity. Involved in leukocyte adhesion and transmigration of leukocytes including T-cells and neutrophils. Acts as a platform at the immunological synapse to translate TCR engagement and density of the ITGAL ligand ICAM1 into graded adhesion. Required for generation of common lymphoid progenitor cells in bone marrow, indicating the role in lymphopoiesis. Integrin ITGAL/ITGB2 in association with ICAM3, contributes to apoptotic neutrophil phagocytosis by macrophages. The chain is Integrin alpha-L from Bos taurus (Bovine).